Here is a 256-residue protein sequence, read N- to C-terminus: 6-phosphogluconolactonase (256 aa).

This sequence belongs to the glucosamine/galactosamine-6-phosphate isomerase family. 6-phosphogluconolactonase subfamily.

The catalysed reaction is 6-phospho-D-glucono-1,5-lactone + H2O = 6-phospho-D-gluconate + H(+). The protein operates within carbohydrate degradation; pentose phosphate pathway; D-ribulose 5-phosphate from D-glucose 6-phosphate (oxidative stage): step 2/3. Its function is as follows. Hydrolysis of 6-phosphogluconolactone to 6-phosphogluconate. The sequence is that of 6-phosphogluconolactonase (pgl) from Chlamydia muridarum (strain MoPn / Nigg).